Consider the following 139-residue polypeptide: MANSASGMAVGDECKLKFQELKSKRSFRFITFKIDERTQQVVVDRLGQPGDTYDDFTASMPASECRYAVFDFDFVTDENCQKSKIFFISWSPDTSKVRSKMLYASSKDRFKRELDGIQVELQATDPSEMSMDIVKARAL.

The region spanning 5-139 is the ADF-H domain; the sequence is ASGMAVGDEC…SMDIVKARAL (135 aa).

This sequence belongs to the actin-binding proteins ADF family.

In terms of biological role, actin-depolymerizing protein. Severs actin filaments (F-actin) and binds to actin monomers. The polypeptide is Actin-depolymerizing factor 6 (ADF6) (Oryza sativa subsp. japonica (Rice)).